The following is a 293-amino-acid chain: Ribosomal protein L11 methyltransferase (293 aa).

S-adenosyl-L-methionine contacts are provided by Thr-145, Gly-166, Asp-188, and Asn-230.

Belongs to the methyltransferase superfamily. PrmA family.

It localises to the cytoplasm. It catalyses the reaction L-lysyl-[protein] + 3 S-adenosyl-L-methionine = N(6),N(6),N(6)-trimethyl-L-lysyl-[protein] + 3 S-adenosyl-L-homocysteine + 3 H(+). Its function is as follows. Methylates ribosomal protein L11. The protein is Ribosomal protein L11 methyltransferase of Klebsiella pneumoniae subsp. pneumoniae (strain ATCC 700721 / MGH 78578).